We begin with the raw amino-acid sequence, 119 residues long: Large ribosomal subunit protein bL20 (119 aa).

It belongs to the bacterial ribosomal protein bL20 family.

Functionally, binds directly to 23S ribosomal RNA and is necessary for the in vitro assembly process of the 50S ribosomal subunit. It is not involved in the protein synthesizing functions of that subunit. This is Large ribosomal subunit protein bL20 from Verminephrobacter eiseniae (strain EF01-2).